The sequence spans 89 residues: MSVLEKPKKTAEQDWHRADILAELKKNGWSLRSLAKEGQVSYNTLKTVLDKSYPKMERLVANAIGVPPEVIWAGRFAERNKRPTLQHKY.

The H-T-H motif DNA-binding region spans 57–76 (ERLVANAIGVPPEVIWAGRF).

This sequence belongs to the ner transcriptional regulatory family.

Its function is as follows. Negative regulator of transcription starting from the Pe and Pc promoters of Mu. Also negatively regulates its own gene transcription. This is Mu-like prophage FluMu DNA-binding protein Ner (nlp) from Haemophilus influenzae (strain ATCC 51907 / DSM 11121 / KW20 / Rd).